The following is a 310-amino-acid chain: MIIVTGGAGFIGSNIVKALNDKGITDILVVDNLKDGTKFVNLVDLNIADYMDKEDFLIQIMSGEELGDIEAIFHEGACSSTTEWDGKYMMDNNYQYSKELLHYCLEREIPFLYASSAATYGGRTSDFIESREYEKPLNVYGYSKFLFDEYVRQILPEANSQIVGFRYFNVYGPREGHKGSMASVAFHLNTQLNNGESPKLFEGSENFKRDFVYVGDVAAVNLWFLESGKSGIFNLGTGRAESFQAVADATLAYHKKGSIEYIPFPDKLKGRYQAFTQADLTNLRNAGYDKPFKTVAEGVTEYMAWLNRDA.

NADP(+) is bound by residues phenylalanine 10–isoleucine 11, aspartate 31–asparagine 32, lysine 38, lysine 53, glutamate 75–serine 79, and asparagine 92. The active-site Proton acceptor is tyrosine 140. Position 144 (lysine 144) interacts with NADP(+). Asparagine 169 serves as a coordination point for substrate. Valine 170 and lysine 178 together coordinate NADP(+). Lysine 178 serves as the catalytic Proton acceptor. Residues serine 180, histidine 187, phenylalanine 201 to serine 204, arginine 209, and tyrosine 272 each bind substrate.

Belongs to the NAD(P)-dependent epimerase/dehydratase family. HldD subfamily. As to quaternary structure, homopentamer. Requires NADP(+) as cofactor.

It catalyses the reaction ADP-D-glycero-beta-D-manno-heptose = ADP-L-glycero-beta-D-manno-heptose. It functions in the pathway nucleotide-sugar biosynthesis; ADP-L-glycero-beta-D-manno-heptose biosynthesis; ADP-L-glycero-beta-D-manno-heptose from D-glycero-beta-D-manno-heptose 7-phosphate: step 4/4. Its function is as follows. Catalyzes the interconversion between ADP-D-glycero-beta-D-manno-heptose and ADP-L-glycero-beta-D-manno-heptose via an epimerization at carbon 6 of the heptose. This Salmonella heidelberg (strain SL476) protein is ADP-L-glycero-D-manno-heptose-6-epimerase.